Consider the following 488-residue polypeptide: Histone deacetylase 2 (488 aa).

The interval 9 to 322 (KKKVCYYYDG…WTYETAVALD (314 aa)) is histone deacetylase. Residues Gly28 and Lys32 each coordinate 1D-myo-inositol 1,4,5,6-tetrakisphosphate. Lys75 is modified (N6-acetyllysine; alternate). Residue Lys75 forms a Glycyl lysine isopeptide (Lys-Gly) (interchain with G-Cter in SUMO2); alternate linkage. The active site involves His142. The Ca(2+) site is built by Asp175, Asp177, His179, Phe188, Thr191, Val194, Ser198, and Phe199. Residues Asp177 and His179 each contribute to the Zn(2+) site. Lys221 carries the N6-acetyllysine modification. Tyr223 contributes to the Ca(2+) binding site. S-nitrosocysteine is present on Cys262. Residue Asp265 coordinates Zn(2+). Residue Arg271 coordinates 1D-myo-inositol 1,4,5,6-tetrakisphosphate. Cys274 carries the post-translational modification S-nitrosocysteine. The disordered stretch occupies residues 389-488 (AVHEDSGDED…GAKSEQLSNP (100 aa)). 4 positions are modified to phosphoserine: Ser394, Ser407, Ser422, and Ser424. Over residues 402–417 (PDKRISIRASDKRIAC) the composition is skewed to basic and acidic residues. Residues 418–428 (DEEFSDSEDEG) are compositionally biased toward acidic residues. A compositionally biased stretch (basic and acidic residues) spans 429–481 (EGGRRNVADHKKGAKKARIEEDKKETEDKKTDVKEEDKSKDNSGEKTDPKGAK). Residues Lys439, Lys452, Lys458, Lys462, Lys478, and Lys481 each participate in a glycyl lysine isopeptide (Lys-Gly) (interchain with G-Cter in SUMO2) cross-link.

This sequence belongs to the histone deacetylase family. HD type 1 subfamily. Part of the core histone deacetylase (HDAC) complex composed of HDAC1, HDAC2, RBBP4 and RBBP7, the core complex associates with SIN3, SAP18 and SAP30 to form the SIN3 HDAC complex. Component of the nucleosome remodeling and deacetylase (NuRD) repressor complex, composed of core proteins MTA1, MTA2, MTA3, RBBP4, RBBP7, HDAC1, HDAC2, MBD2, MBD3, and peripherally associated proteins CDK2AP1, CDK2AP2, GATAD2A, GATAD2B, CHD3, CHD4 and CHD5. The exact stoichiometry of the NuRD complex is unknown, and some subunits such as MBD2 and MBD3, GATAD2A and GATAD2B, and CHD3, CHD4 and CHD5 define mutually exclusive NuRD complexes. Component of a RCOR/GFI/KDM1A/HDAC complex. Component of a BHC histone deacetylase complex that contains HDAC1, HDAC2, HMG20B, KDM1A, RCOR1 and PHF21A. The BHC complex may also contain ZMYM2, ZNF217, ZMYM3, GSE1 and GTF2I. Part of a complex containing the core histones H2A, H2B, H3 and H4, DEK and unphosphorylated DAXX. Part of a complex containing ATR and CHD4. Forms a heterologous complex at least with YY1. Interacts in the late S-phase of DNA-replication with DNMT1 in the other transcriptional repressor complex composed of DNMT1, DMAP1, PCNA, CAF1. Component of a mSin3A corepressor complex that contains SIN3A, SAP130, SUDS3, ARID4B, HDAC1 and HDAC2. Part of a complex composed of TRIM28, HDAC1, HDAC2 and EHMT2. Part of a complex containing at least CDYL, MIER1, MIER2, HDAC1 and HDAC2. Component of a histone deacetylase complex containing DNTTIP1, ZNF541, HDAC1 and HDAC2. Forms a complex comprising APPL1, RUVBL2, APPL2, CTNNB1 and HDAC1. Interacts directly with GFI1. Interacts directly with GFI1B. Interacts with APEX1; the interaction is not dependent on the acetylated status of APEX1. Interacts with ATR. Interacts with BCL6 (non-acetylated form). Interacts with BEND3. Interacts with CBFA2T3. Interacts with CDK2AP1. Interacts with CHD4. Interacts with CHD5. Interacts with CHFR. Interacts with CRY1. Interacts with DNMT1. Interacts with GATAD2A. Interacts with HCFC1. Interacts with HDAC7. Interacts with HDAC10. Interacts with INSM1. Interacts with KDM4A. Interacts with MACROH2A1 (via the non-histone region). Interacts with MBD3L2. Interacts with MTA1, with a preference for sumoylated MTA1. Interacts with NACC2. Interacts with NRIP1. Interacts with PELP1. Interacts with PIMREG. Interacts with PRDM6. Interacts with PWWP2B Interacts with SAP30. Interacts with SAP30L. Interacts with SETDB1. Interacts with SIX3. Interacts with SMARCAD1. Interacts with SNW1. Interacts with SPHK2. Interacts with SPEN/MINT. Interacts (CK2 phosphorylated form) with SP3. Interacts with SUV39H1. Interacts with TSHZ3 (via its N-terminus). Interacts with ZMYND8. Interacts with ZNF431. Interacts with ZNF263; recruited to the SIX3 promoter along with other proteins involved in chromatin modification and transcriptional corepression where it contributes to transcriptional repression. Identified in a complex with HDAC1, KCTD19, DNTTIP1 and ZNF541. Component of the SIN3B complex, which includes SIN3B, HDAC2, PHF12 and MORF4L1; interacts directly with all subunits. The cofactor is Zn(2+). Requires Ca(2+) as cofactor. In terms of processing, S-nitrosylated by GAPDH. In neurons, S-nitrosylation at Cys-262 and Cys-274 does not affect enzyme activity, but induces HDAC2 release from chromatin. This in turn increases acetylation of histones surrounding neurotrophin-dependent gene promoters and promotes their transcription. In embryonic cortical neurons, S-Nitrosylation regulates dendritic growth and branching.

It localises to the nucleus. The protein resides in the cytoplasm. It catalyses the reaction N(6)-acetyl-L-lysyl-[histone] + H2O = L-lysyl-[histone] + acetate. The catalysed reaction is N(6)-acetyl-L-lysyl-[protein] + H2O = L-lysyl-[protein] + acetate. The enzyme catalyses N(6)-(2E)-butenoyl-L-lysyl-[protein] + H2O = (2E)-2-butenoate + L-lysyl-[protein]. It carries out the reaction N(6)-(2-hydroxyisobutanoyl)-L-lysyl-[protein] + H2O = 2-hydroxy-2-methylpropanoate + L-lysyl-[protein]. It catalyses the reaction N(6)-[(S)-lactoyl]-L-lysyl-[protein] + H2O = (S)-lactate + L-lysyl-[protein]. Its activity is regulated as follows. Inositol tetraphosphate (1D-myo-inositol 1,4,5,6-tetrakisphosphate) may act as an intermolecular glue between HDAC2 and N-Cor repressor complex components. In terms of biological role, histone deacetylase that catalyzes the deacetylation of lysine residues on the N-terminal part of the core histones (H2A, H2B, H3 and H4). Histone deacetylation gives a tag for epigenetic repression and plays an important role in transcriptional regulation, cell cycle progression and developmental events. Histone deacetylases act via the formation of large multiprotein complexes. Forms transcriptional repressor complexes by associating with MAD, SIN3, YY1 and N-COR. Component of a RCOR/GFI/KDM1A/HDAC complex that suppresses, via histone deacetylase (HDAC) recruitment, a number of genes implicated in multilineage blood cell development. Acts as a component of the histone deacetylase NuRD complex which participates in the remodeling of chromatin. Component of the SIN3B complex that represses transcription and counteracts the histone acetyltransferase activity of EP300 through the recognition H3K27ac marks by PHF12 and the activity of the histone deacetylase HDAC2. Also deacetylates non-histone targets: deacetylates TSHZ3, thereby regulating its transcriptional repressor activity. May be involved in the transcriptional repression of circadian target genes, such as PER1, mediated by CRY1 through histone deacetylation. Involved in MTA1-mediated transcriptional corepression of TFF1 and CDKN1A. In addition to protein deacetylase activity, also acts as a protein-lysine deacylase by recognizing other acyl groups: catalyzes removal of (2E)-butenoyl (crotonyl), lactoyl (lactyl) and 2-hydroxyisobutanoyl (2-hydroxyisobutyryl) acyl groups from lysine residues, leading to protein decrotonylation, delactylation and de-2-hydroxyisobutyrylation, respectively. This chain is Histone deacetylase 2, found in Mus musculus (Mouse).